The chain runs to 507 residues: Transcription factor SOX-9 (507 aa).

Disordered regions lie at residues 1-67 and 160-250; these read MNLL…SEED and RLRV…AGKV. The segment covering 30 to 41 has biased composition (low complexity); it reads SAGSPCPSGSGS. A compositionally biased stretch (polar residues) spans 42-52; the sequence is DTENTRPQENT. Composition is skewed to basic and acidic residues over residues 56 to 67 and 160 to 174; these read GEPDLKKESEED and RLRV…DYKY. The interval 63–103 is dimerization (DIM); it reads ESEEDKFPVCIREAVSQVLKGYDWTLVPMPVRVNGSSKNKP. Positions 63 to 103 are PQA; the sequence is ESEEDKFPVCIREAVSQVLKGYDWTLVPMPVRVNGSSKNKP. A Phosphoserine modification is found at Ser-64. The segment at residues 105 to 173 is a DNA-binding region (HMG box); that stretch reads VKRPMNAFMV…QHKKDHPDYK (69 aa). Phosphoserine is present on Ser-211. Positions 224–307 are transactivation domain (TAM); the sequence is PGEHSGQSQG…LPPNGHPGVP (84 aa). 2 consecutive short sequence motifs (9aaTAD) follow at residues 275–284 and 290–298; these read IGELSSDVIS and DVNEFDQYL. The interval 335-429 is disordered; the sequence is WMSKQQAPPP…PFNLPHYNPS (95 aa). The segment covering 341–369 has biased composition (pro residues); sequence APPPPPQQPPQAPQAPQAPPQQQAPPQPQ. Residues 378–420 show a composition bias toward polar residues; it reads HTLTTLSSEPGQSQRTHIKTEQLSPSHYSEQQQHSPQQISYSP. Positions 392 to 507 are transactivation domain (TAC); that stretch reads RTHIKTEQLS…QPVYTQLTRP (116 aa). Lys-396 is covalently cross-linked (Glycyl lysine isopeptide (Lys-Gly) (interchain with G-Cter in ubiquitin)). Positions 458–466 match the 9aaTAD 3 motif; the sequence is SGLYSTFTY. The tract at residues 477-507 is disordered; it reads PIADTSGVPSIPQTHSPQHWEQPVYTQLTRP. Over residues 483 to 507 the composition is skewed to polar residues; the sequence is GVPSIPQTHSPQHWEQPVYTQLTRP.

Homodimer; homodimerization is required for activity. Interacts (via C-terminus) with ZNF219; forming a complex that binds to the COL2A1 promoter and activates COL2A1 expression. Interacts with DDRGK1. Interacts with EP300/p300. Interacts with beta-catenin (CTNNB1); inhibiting CTNNB1 activity by competing with the binding sites of TCF/LEF within CTNNB1. Post-translationally, acetylated; acetylation impairs nuclear localization and ability to transactivate expression of target genes. Deacetylated by SIRT1. In terms of processing, phosphorylation at Ser-64 and Ser-211 by PKA increases transcriptional activity and may help delay chondrocyte maturation downstream of PTHLH/PTHrP signaling. Phosphorylation at either Ser-64 or Ser-211 is required for sumoylation, but phosphorylation is not dependent on sumoylation. Phosphorylated on tyrosine residues; tyrosine dephosphorylation by PTPN11/SHP2 blocks SOX9 phosphorylation by PKA and subsequent SUMOylation. Sumoylated; phosphorylation at either Ser-64 or Ser-211 is required for sumoylation. Sumoylation is induced by BMP signaling pathway. Post-translationally, ubiquitinated; ubiquitination leads to proteasomal degradation and is negatively regulated by DDRGK1.

The protein resides in the nucleus. In terms of biological role, transcription factor that plays a key role in chondrocytes differentiation and skeletal development. Specifically binds the 5'-ACAAAG-3' DNA motif present in enhancers and super-enhancers and promotes expression of genes important for chondrogenesis, including cartilage matrix protein-coding genes COL2A1, COL4A2, COL9A1, COL11A2 and ACAN, SOX5 and SOX6. Also binds to some promoter regions. Plays a central role in successive steps of chondrocyte differentiation. Absolutely required for precartilaginous condensation, the first step in chondrogenesis during which skeletal progenitors differentiate into prechondrocytes. Together with SOX5 and SOX6, required for overt chondrogenesis when condensed prechondrocytes differentiate into early stage chondrocytes, the second step in chondrogenesis. Later, required to direct hypertrophic maturation and block osteoblast differentiation of growth plate chondrocytes: maintains chondrocyte columnar proliferation, delays prehypertrophy and then prevents osteoblastic differentiation of chondrocytes by lowering beta-catenin (CTNNB1) signaling and RUNX2 expression. Also required for chondrocyte hypertrophy, both indirectly, by keeping the lineage fate of chondrocytes, and directly, by remaining present in upper hypertrophic cells and transactivating COL10A1 along with MEF2C. Low lipid levels are the main nutritional determinant for chondrogenic commitment of skeletal progenitor cells: when lipids levels are low, FOXO (FOXO1 and FOXO3) transcription factors promote expression of SOX9, which induces chondrogenic commitment and suppresses fatty acid oxidation. Mechanistically, helps, but is not required, to remove epigenetic signatures of transcriptional repression and deposit active promoter and enhancer marks at chondrocyte-specific genes. Acts in cooperation with the Hedgehog pathway-dependent GLI (GLI1 and GLI3) transcription factors. In addition to cartilage development, also acts as a regulator of proliferation and differentiation in epithelial stem/progenitor cells: involved in the lung epithelium during branching morphogenesis, by balancing proliferation and differentiation and regulating the extracellular matrix. Controls epithelial branching during kidney development. This is Transcription factor SOX-9 from Rattus norvegicus (Rat).